The chain runs to 203 residues: 5-formyltetrahydrofolate cyclo-ligase (203 aa).

A2 carries the N-acetylalanine modification. ATP is bound by residues 10–14 (KRGLR) and R14. Substrate-binding positions include L56, E61, and 148-152 (RGKGY). 145–153 (RLGRGKGYY) is an ATP binding site. Mg(2+) is bound by residues D154 and D189.

It belongs to the 5-formyltetrahydrofolate cyclo-ligase family. In terms of assembly, monomer. Mg(2+) is required as a cofactor.

The protein resides in the cytoplasm. The catalysed reaction is (6S)-5-formyl-5,6,7,8-tetrahydrofolate + ATP = (6R)-5,10-methenyltetrahydrofolate + ADP + phosphate. In terms of biological role, contributes to tetrahydrofolate metabolism. Helps regulate carbon flow through the folate-dependent one-carbon metabolic network that supplies carbon for the biosynthesis of purines, thymidine and amino acids. Catalyzes the irreversible conversion of 5-formyltetrahydrofolate (5-CHO-H(4)PteGlu) to yield 5,10-methenyltetrahydrofolate. The protein is 5-formyltetrahydrofolate cyclo-ligase (Mthfs) of Mus musculus (Mouse).